The sequence spans 175 residues: ATP-dependent protease subunit HslV (175 aa).

The active site involves Thr-2. Ala-159, Asp-162, and Thr-165 together coordinate Na(+).

Belongs to the peptidase T1B family. HslV subfamily. In terms of assembly, a double ring-shaped homohexamer of HslV is capped on each side by a ring-shaped HslU homohexamer. The assembly of the HslU/HslV complex is dependent on binding of ATP.

The protein localises to the cytoplasm. It catalyses the reaction ATP-dependent cleavage of peptide bonds with broad specificity.. Allosterically activated by HslU binding. Its function is as follows. Protease subunit of a proteasome-like degradation complex believed to be a general protein degrading machinery. The polypeptide is ATP-dependent protease subunit HslV (Ligilactobacillus salivarius (strain UCC118) (Lactobacillus salivarius)).